The primary structure comprises 147 residues: Endoribonuclease YbeY (147 aa).

Zn(2+)-binding residues include histidine 108, histidine 112, and histidine 118.

The protein belongs to the endoribonuclease YbeY family. Zn(2+) serves as cofactor.

It is found in the cytoplasm. In terms of biological role, single strand-specific metallo-endoribonuclease involved in late-stage 70S ribosome quality control and in maturation of the 3' terminus of the 16S rRNA. This chain is Endoribonuclease YbeY, found in Sulfurovum sp. (strain NBC37-1).